The chain runs to 281 residues: Undecaprenyl-diphosphatase (281 aa).

The next 8 membrane-spanning stretches (helical) occupy residues 2–22, 46–66, 93–113, 115–135, 152–172, 190–210, 228–248, and 259–279; these read FDLI…FLPV, AFSS…VIQL, VIVG…FMDA, LMNF…FIVI, ITFK…VPGT, FVAA…VTFL, IVML…IKFM, and VFGY…ILGI.

It belongs to the UppP family.

The protein localises to the cell membrane. The enzyme catalyses di-trans,octa-cis-undecaprenyl diphosphate + H2O = di-trans,octa-cis-undecaprenyl phosphate + phosphate + H(+). Its function is as follows. Catalyzes the dephosphorylation of undecaprenyl diphosphate (UPP). Confers resistance to bacitracin. The protein is Undecaprenyl-diphosphatase of Leuconostoc mesenteroides subsp. mesenteroides (strain ATCC 8293 / DSM 20343 / BCRC 11652 / CCM 1803 / JCM 6124 / NCDO 523 / NBRC 100496 / NCIMB 8023 / NCTC 12954 / NRRL B-1118 / 37Y).